We begin with the raw amino-acid sequence, 205 residues long: tRNA (guanine-N(7)-)-methyltransferase (205 aa).

Residues Glu-34, Glu-59, Asp-86, and Asp-107 each coordinate S-adenosyl-L-methionine. The active site involves Asp-107. Lys-111 is a substrate binding site. Positions 113 to 118 are interaction with RNA; that stretch reads RHEKRR. Residues Asp-144 and 182–185 contribute to the substrate site; that span reads TGYE.

It belongs to the class I-like SAM-binding methyltransferase superfamily. TrmB family.

The catalysed reaction is guanosine(46) in tRNA + S-adenosyl-L-methionine = N(7)-methylguanosine(46) in tRNA + S-adenosyl-L-homocysteine. Its pathway is tRNA modification; N(7)-methylguanine-tRNA biosynthesis. Functionally, catalyzes the formation of N(7)-methylguanine at position 46 (m7G46) in tRNA. The chain is tRNA (guanine-N(7)-)-methyltransferase from Mycoplasmopsis synoviae (strain 53) (Mycoplasma synoviae).